Here is a 259-residue protein sequence, read N- to C-terminus: Potassium/proton antiporter CemA (259 aa).

The next 4 membrane-spanning stretches (helical) occupy residues 47-67 (CLLV…EPWV), 136-156 (IITH…YLVM), 184-204 (ILLA…ELLI), and 219-239 (IISS…KYWI).

This sequence belongs to the CemA family.

The protein resides in the plastid. It localises to the chloroplast inner membrane. It catalyses the reaction K(+)(in) + H(+)(out) = K(+)(out) + H(+)(in). Its function is as follows. Contributes to K(+)/H(+) antiport activity by supporting proton efflux to control proton extrusion and homeostasis in chloroplasts in a light-dependent manner to modulate photosynthesis. Prevents excessive induction of non-photochemical quenching (NPQ) under continuous-light conditions. Indirectly promotes efficient inorganic carbon uptake into chloroplasts. This is Potassium/proton antiporter CemA from Welwitschia mirabilis (Tree tumbo).